We begin with the raw amino-acid sequence, 523 residues long: 2-isopropylmalate synthase (523 aa).

The Pyruvate carboxyltransferase domain maps to 5-267 (VIIFDTTLRD…HTAINHQEIW (263 aa)). The Mn(2+) site is built by Asp14, His202, His204, and Asn238. The segment at 392–523 (RLDYFSVQSG…QHNENNKETV (132 aa)) is regulatory domain.

Belongs to the alpha-IPM synthase/homocitrate synthase family. LeuA type 1 subfamily. As to quaternary structure, homodimer. Requires Mn(2+) as cofactor.

It localises to the cytoplasm. It carries out the reaction 3-methyl-2-oxobutanoate + acetyl-CoA + H2O = (2S)-2-isopropylmalate + CoA + H(+). The protein operates within amino-acid biosynthesis; L-leucine biosynthesis; L-leucine from 3-methyl-2-oxobutanoate: step 1/4. Functionally, catalyzes the condensation of the acetyl group of acetyl-CoA with 3-methyl-2-oxobutanoate (2-ketoisovalerate) to form 3-carboxy-3-hydroxy-4-methylpentanoate (2-isopropylmalate). In Escherichia coli O127:H6 (strain E2348/69 / EPEC), this protein is 2-isopropylmalate synthase.